Consider the following 113-residue polypeptide: Carboxysome shell protein CcmK4 (113 aa).

The region spanning 5-91 (AIGSLETKGF…PHENVEAVFP (87 aa)) is the BMC domain.

Belongs to the bacterial microcompartments protein family. CcmK subfamily. As to quaternary structure, homohexamer. Interacts stably with CcmK3, probably forms heterohexamers with a 1:2 CcmK3:CcmK4 stoichiometry.

The protein resides in the carboxysome. Functionally, one of the shell proteins of the carboxysome, a polyhedral inclusion where RuBisCO (ribulose bisphosphate carboxylase, rbcL-rbcS) is sequestered. Assembles into hexamers which make sheets that form the facets of the polyhedral carboxysome. The hexamer central pore probably regulates metabolite flux. In terms of biological role, a minor shell protein of the carboxysome, a polyhedral inclusion where RuBisCO (ribulose bisphosphate carboxylase, rbcL-rbcS) is sequestered. Hexamers form sheets that form the facets of the polyhedral carboxysome. The shell is 4.5 nm thick, as observed for CcmK proteins. In PCC 7942 there are several CcmK paralogs with presumably functional differences; replacing the central pore residues (34-37) with those of CcmK2 from this organism (Tyr-Glu-Lys-Ile) allows the bacterium to make carboxysomes, but the expression level is too low to know if the carboxysome is functional for CO(2) fixation. This subunit probably makes both homohexamers and heterohexamers with CcmK3. The CcmK3-CcmK4 heterohexmers have been suggested to cap other hexamers, perhaps to alter metabolite flux. This Synechococcus elongatus (strain ATCC 33912 / PCC 7942 / FACHB-805) (Anacystis nidulans R2) protein is Carboxysome shell protein CcmK4.